Reading from the N-terminus, the 345-residue chain is Protein RecA (345 aa).

81 to 88 (GPESSGKT) is a binding site for ATP.

The protein belongs to the RecA family.

The protein resides in the cytoplasm. Its function is as follows. Can catalyze the hydrolysis of ATP in the presence of single-stranded DNA, the ATP-dependent uptake of single-stranded DNA by duplex DNA, and the ATP-dependent hybridization of homologous single-stranded DNAs. It interacts with LexA causing its activation and leading to its autocatalytic cleavage. In Mycoplasma mycoides, this protein is Protein RecA.